The following is a 451-amino-acid chain: Bifunctional protein GlmU (451 aa).

Residues 1–229 (MQRHAIILAA…FDEIIGVNDR (229 aa)) are pyrophosphorylase. Residues 8–11 (LAAG), lysine 22, glutamine 72, and 77–78 (GT) contribute to the UDP-N-acetyl-alpha-D-glucosamine site. Mg(2+) is bound at residue aspartate 102. Residues glycine 139, glutamate 154, and asparagine 227 each coordinate UDP-N-acetyl-alpha-D-glucosamine. Position 227 (asparagine 227) interacts with Mg(2+). The linker stretch occupies residues 230–250 (LMLSEAEKALQQRINRYHMEN). Residues 251–451 (GVTIIDPSST…QVNKEGYLKK (201 aa)) form an N-acetyltransferase region. 2 residues coordinate UDP-N-acetyl-alpha-D-glucosamine: arginine 332 and lysine 350. The Proton acceptor role is filled by histidine 362. UDP-N-acetyl-alpha-D-glucosamine is bound by residues tyrosine 365 and asparagine 376. Residues 385 to 386 (NY), alanine 422, and arginine 439 contribute to the acetyl-CoA site.

This sequence in the N-terminal section; belongs to the N-acetylglucosamine-1-phosphate uridyltransferase family. It in the C-terminal section; belongs to the transferase hexapeptide repeat family. Homotrimer. Requires Mg(2+) as cofactor.

Its subcellular location is the cytoplasm. It carries out the reaction alpha-D-glucosamine 1-phosphate + acetyl-CoA = N-acetyl-alpha-D-glucosamine 1-phosphate + CoA + H(+). It catalyses the reaction N-acetyl-alpha-D-glucosamine 1-phosphate + UTP + H(+) = UDP-N-acetyl-alpha-D-glucosamine + diphosphate. It participates in nucleotide-sugar biosynthesis; UDP-N-acetyl-alpha-D-glucosamine biosynthesis; N-acetyl-alpha-D-glucosamine 1-phosphate from alpha-D-glucosamine 6-phosphate (route II): step 2/2. The protein operates within nucleotide-sugar biosynthesis; UDP-N-acetyl-alpha-D-glucosamine biosynthesis; UDP-N-acetyl-alpha-D-glucosamine from N-acetyl-alpha-D-glucosamine 1-phosphate: step 1/1. Its pathway is bacterial outer membrane biogenesis; LPS lipid A biosynthesis. Its function is as follows. Catalyzes the last two sequential reactions in the de novo biosynthetic pathway for UDP-N-acetylglucosamine (UDP-GlcNAc). The C-terminal domain catalyzes the transfer of acetyl group from acetyl coenzyme A to glucosamine-1-phosphate (GlcN-1-P) to produce N-acetylglucosamine-1-phosphate (GlcNAc-1-P), which is converted into UDP-GlcNAc by the transfer of uridine 5-monophosphate (from uridine 5-triphosphate), a reaction catalyzed by the N-terminal domain. The chain is Bifunctional protein GlmU from Staphylococcus epidermidis.